The sequence spans 110 residues: Phosphoribosyl-ATP pyrophosphatase (110 aa).

Belongs to the PRA-PH family.

It is found in the cytoplasm. It carries out the reaction 1-(5-phospho-beta-D-ribosyl)-ATP + H2O = 1-(5-phospho-beta-D-ribosyl)-5'-AMP + diphosphate + H(+). It functions in the pathway amino-acid biosynthesis; L-histidine biosynthesis; L-histidine from 5-phospho-alpha-D-ribose 1-diphosphate: step 2/9. The protein is Phosphoribosyl-ATP pyrophosphatase of Clostridium botulinum (strain Kyoto / Type A2).